A 510-amino-acid polypeptide reads, in one-letter code: uncharacterized protein (510 aa).

Disordered regions lie at residues Met-1–Leu-154, Asp-208–Ala-227, Thr-234–Leu-276, and Asn-368–Arg-480. A Phosphoserine modification is found at Ser-43. Positions Pro-50 to Ala-60 are enriched in polar residues. Basic and acidic residues predominate over residues Glu-78–Gly-92. Ser-84 bears the Phosphoserine mark. Composition is skewed to polar residues over residues Ser-97–Asn-109 and Gln-118–Arg-135. Ser-120 is modified (phosphoserine). Low complexity predominate over residues Ala-139–Ala-151. Residues Ser-243–Gly-255 show a composition bias toward low complexity. The span at Arg-379–Arg-395 shows a compositional bias: basic and acidic residues. Residues Ser-414–Ser-441 show a composition bias toward polar residues.

This is an uncharacterized protein from Rattus norvegicus (Rat).